The following is a 153-amino-acid chain: Bkd operon transcriptional regulator (153 aa).

An HTH asnC-type domain is found at 4–65 (LDRIDLKILR…RLDEERLSGA (62 aa)). The H-T-H motif DNA-binding region spans 23–42 (WRDLAQKVGLSLTPTLRRVR).

Positive regulator of the bkd operon for branched-chain keto acid dehydrogenase complex. The chain is Bkd operon transcriptional regulator (bkdR) from Pseudomonas aeruginosa (strain ATCC 15692 / DSM 22644 / CIP 104116 / JCM 14847 / LMG 12228 / 1C / PRS 101 / PAO1).